We begin with the raw amino-acid sequence, 532 residues long: Phosphoenolpyruvate carboxykinase (ATP) (532 aa).

R60, Y194, and K200 together coordinate substrate. Residues K200, H219, and 237 to 245 each bind ATP; that span reads GLSGTGKTT. Mn(2+) contacts are provided by K200 and H219. Mn(2+) is bound at residue D258. ATP is bound by residues E286, R324, and T449. R324 contacts substrate.

It belongs to the phosphoenolpyruvate carboxykinase (ATP) family. Mn(2+) is required as a cofactor.

The protein localises to the cytoplasm. The enzyme catalyses oxaloacetate + ATP = phosphoenolpyruvate + ADP + CO2. The protein operates within carbohydrate biosynthesis; gluconeogenesis. Involved in the gluconeogenesis. Catalyzes the conversion of oxaloacetate (OAA) to phosphoenolpyruvate (PEP) through direct phosphoryl transfer between the nucleoside triphosphate and OAA. The chain is Phosphoenolpyruvate carboxykinase (ATP) from Ruegeria pomeroyi (strain ATCC 700808 / DSM 15171 / DSS-3) (Silicibacter pomeroyi).